The primary structure comprises 89 residues: Cell division topological specificity factor (89 aa).

Belongs to the MinE family.

Its function is as follows. Prevents the cell division inhibition by proteins MinC and MinD at internal division sites while permitting inhibition at polar sites. This ensures cell division at the proper site by restricting the formation of a division septum at the midpoint of the long axis of the cell. The chain is Cell division topological specificity factor from Pectobacterium carotovorum subsp. carotovorum (strain PC1).